A 150-amino-acid polypeptide reads, in one-letter code: Large ribosomal subunit protein bL9 (150 aa).

It belongs to the bacterial ribosomal protein bL9 family.

Functionally, binds to the 23S rRNA. This Lactiplantibacillus plantarum (strain ATCC BAA-793 / NCIMB 8826 / WCFS1) (Lactobacillus plantarum) protein is Large ribosomal subunit protein bL9.